The chain runs to 685 residues: Amino acid transporter heavy chain SLC3A1 (685 aa).

Over residues 1 to 10 the composition is skewed to basic and acidic residues; it reads MDEDKGKRDP. Positions 1-53 are disordered; sequence MDEDKGKRDPIQMSLKGCRTNNGFVQNEDIPEQDPDPGSRDTPQPNAVSIPAP. Residues 1–88 are Cytoplasmic-facing; sequence MDEDKGKRDP…ARYRVPREIL (88 aa). A helical; Signal-anchor for type II membrane protein transmembrane segment spans residues 89 to 109; that stretch reads FWLTVVSVFLLIGATIAIIVI. The Extracellular segment spans residues 110–685; it reads SPKCLDWWQA…SALDILYSSC (576 aa). Asn213 serves as a coordination point for Ca(2+). 3 N-linked (GlcNAc...) asparagine glycosylation sites follow: Asn213, Asn240, and Asn260. A disulfide bond links Cys241 and Cys272. Ca(2+) is bound by residues Asp283, Phe317, Leu318, and Glu320. A glycan (N-linked (GlcNAc...) asparagine) is linked at Asn331. Phosphoserine is present on Ser385. N-linked (GlcNAc...) asparagine glycans are attached at residues Asn512 and Asn522. 2 disulfide bridges follow: Cys570–Cys666 and Cys673–Cys685.

Disulfide-linked heterodimer composed of the catalytic light subunit SLC7A9 and the heavy subunit SLC3A1. The heterodimer is the minimal functional unit. Assembles in non-covalently linked heterotetramers (dimers of heterodimers) and higher order oligomers; the oligomerization is mediated by SLC3A1 likely to prevent degradation in the endoplasmic reticulum and facilitate heteromer trafficking to the plasma membrane. Disulfide-linked heterodimer composed of the catalytic light subunit SLC7A13 and the heavy subunit SLC3A1. Expressed in the brush border membrane in the kidney (at protein level). Highly expressed in renal tubules in the outer stripe of the outer medulla and medullary ray (at protein level). Also detected in the renal cortex. More abundant in male than female kidneys.

The protein resides in the cell membrane. It is found in the apical cell membrane. Acts as a chaperone that facilitates biogenesis and trafficking of functional transporter heteromers to the plasma membrane. Associates with SLC7A9 to form a functional transporter complex that mediates the electrogenic exchange between cationic amino acids and neutral amino acids, with a stoichiometry of 1:1. SLC7A9-SLC3A1 transporter has system b(0,+)-like activity with high affinity for extracellular cationic amino acids and L-cystine and lower affinity for intracellular neutral amino acids. Substrate exchange is driven by high concentration of intracellular neutral amino acids and the intracellular reduction of L-cystine to L-cysteine. SLC7A9-SLC3A1 acts as a major transporter for reabsorption of L-cystine and dibasic amino acids across the brush border membrane in early proximal tubules. Associates with SLC7A13 to form a functional complex that transports anionic and neutral amino acids via exchange or facilitated diffusion. SLC7A13-SLC3A1 may act as a major transporter for L-cystine in late proximal tubules, ensuring its reabsorption from the luminal fluid in exchange for cytosolic L-glutamate or L-aspartate. The polypeptide is Amino acid transporter heavy chain SLC3A1 (Mus musculus (Mouse)).